The primary structure comprises 506 residues: Probable cytosol aminopeptidase (506 aa).

Residues Lys278 and Asp283 each contribute to the Mn(2+) site. The active site involves Lys290. Mn(2+) contacts are provided by Asp301, Asp360, and Glu362. Residue Arg364 is part of the active site.

This sequence belongs to the peptidase M17 family. Mn(2+) is required as a cofactor.

Its subcellular location is the cytoplasm. The enzyme catalyses Release of an N-terminal amino acid, Xaa-|-Yaa-, in which Xaa is preferably Leu, but may be other amino acids including Pro although not Arg or Lys, and Yaa may be Pro. Amino acid amides and methyl esters are also readily hydrolyzed, but rates on arylamides are exceedingly low.. The catalysed reaction is Release of an N-terminal amino acid, preferentially leucine, but not glutamic or aspartic acids.. Presumably involved in the processing and regular turnover of intracellular proteins. Catalyzes the removal of unsubstituted N-terminal amino acids from various peptides. The protein is Probable cytosol aminopeptidase of Ralstonia nicotianae (strain ATCC BAA-1114 / GMI1000) (Ralstonia solanacearum).